The following is a 433-amino-acid chain: Myricetin 3-O-glucosyl 1,2-rhamnoside 6'-O-caffeoyltransferase AT1 (433 aa).

Catalysis depends on proton acceptor residues His-157 and Asp-375.

This sequence belongs to the plant acyltransferase family. As to expression, expressed in young cromes.

The enzyme catalyses myricetin 3-O-[beta-D-glucosyl-(1-&gt;2)-alpha-L-rhamnoside] + (E)-caffeoyl-CoA = myricetin 3-O-[(6-O-(E)-caffeoyl-beta-D-glucosyl)-(1-&gt;2)-alpha-L-rhamnoside] + CoA. Its pathway is flavonoid metabolism. Caffeoyltransferase involved in montbretin A (MbA) biosynthesis. Catalyzes the caffeoylation of myricetin 3-O-beta-D-glucosyl 1,2-alpha-L-rhamnoside (MRG) to produce myricetin 3-O-(6'-O-caffeoyl)-beta-D-glucosyl 1,2-alpha-L-rhamnoside (mini-MbA), a precursor of MbA. Mini-MbA and MbA are potent inhibitors of human pancreatic alpha-amylase and are being developed as drug candidates to treat type-2 diabetes. In vitro, is able to catalyze the caffeoylation of quercetin 3-O-sophoroside (QGG), although QGG may not be a physiological substrate in vivo. In vitro, can use coumaryl-CoA, feruloyl-CoA and acetyl-CoA, although these three acyl donors may not be physiological in vivo. The sequence is that of Myricetin 3-O-glucosyl 1,2-rhamnoside 6'-O-caffeoyltransferase AT1 from Crocosmia x crocosmiiflora (Montbretia).